Here is a 654-residue protein sequence, read N- to C-terminus: ATP-dependent rRNA helicase spb-4 (654 aa).

Positions 17–45 match the Q motif motif; it reads WDALTPPLAQWILDYLSSMGFTQPTPVQK. The 202-residue stretch at 48–249 folds into the Helicase ATP-binding domain; that stretch reads LELFRGNKDV…TVGLLYPHKI (202 aa). 61–68 provides a ligand contact to ATP; the sequence is AVTGSGKT. The short motif at 197–200 is the DEAD box element; sequence DEAD. Positions 286–444 constitute a Helicase C-terminal domain; sequence AIVQLLEKLE…VTPDEVERVS (159 aa). Positions 531-631 form a coiled coil; it reads REKKRQEELA…EERAAALAAN (101 aa). Residues 542-577 are compositionally biased toward basic and acidic residues; the sequence is WKEEKAKRAQEENTGDKRKKNEAWSGKAEQEETKLQ. The tract at residues 542 to 654 is disordered; that stretch reads WKEEKAKRAQ…SDEEFGGFDD (113 aa). Over residues 578–588 the composition is skewed to basic residues; sequence RREKKRRKREA. Residues 589-625 are compositionally biased toward basic and acidic residues; it reads KKFSEMTEKEKEEHLKLEQMIEEVRKRNEAKAAEERA. Residues 644-654 are compositionally biased toward acidic residues; that stretch reads DSDEEFGGFDD.

It belongs to the DEAD box helicase family. DDX55/SPB4 subfamily. Component of pre-60S ribosomal complexes.

It is found in the nucleus. It localises to the nucleolus. The catalysed reaction is ATP + H2O = ADP + phosphate + H(+). ATP-binding RNA helicase involved in the biogenesis of 60S ribosomal subunits. Binds 90S pre-ribosomal particles and dissociates from pre-60S ribosomal particles after processing of 27SB pre-rRNA. Required for the normal formation of 18S rRNA through the processing of pre-rRNAs at sites A0, A1 and A2, and the normal formation of 25S and 5.8S rRNAs through the processing of pre-rRNAs at sites C1 and C2. This Neurospora crassa (strain ATCC 24698 / 74-OR23-1A / CBS 708.71 / DSM 1257 / FGSC 987) protein is ATP-dependent rRNA helicase spb-4.